Here is a 75-residue protein sequence, read N- to C-terminus: High-potential iron-sulfur protein (75 aa).

The [4Fe-4S] cluster site is built by C38, C41, C54, and C68.

Homodimer. Monomer at different ionic strengths.

Functionally, specific class of high-redox-potential 4Fe-4S ferredoxins. Functions in anaerobic electron transport in most purple and in some other photosynthetic bacteria and in at least one genus (Paracoccus) of halophilic, denitrifying bacteria. Competent in photosynthetic electron transfer to oxidized cytochrome bc1 complex via the membrane-bound c-type tetraheme. The protein is High-potential iron-sulfur protein (hip) of Rhodoferax fermentans.